Consider the following 404-residue polypeptide: Cyclic AMP-responsive element-binding protein 3 (404 aa).

The Cytoplasmic portion of the chain corresponds to 1 to 261 (MDPGGQDLLA…VIEIANKTSS (261 aa)). 2 short sequence motifs (LXXLL motif) span residues 19–23 (LGFLL) and 64–68 (LSSLL). The short motif at 87–90 (DHNY) is the HCFC1-binding-motif (HBM) element. The bZIP domain occupies 185–248 (VLKRVRRKIR…LSLLDQLRKL (64 aa)). Residues 187–225 (KRVRRKIRNKRAAQESRKKKKVYVVGLESRVLKYTAQNR) form a basic motif region. The tract at residues 227 to 248 (LQNKVQRLEEQNLSLLDQLRKL) is leucine-zipper. The helical; Signal-anchor for type II membrane protein transmembrane segment at 262–282 (GSTCVLVLVFSFCLLLVPAMY) threads the bilayer. Topologically, residues 283–404 (SSDARGSVPA…LVIFQGRYSG (122 aa)) are lumenal. Residues 305–327 (PSEDDHQPKPSALSSELPMDSTH) form a disordered region. Asn-342 and Asn-380 each carry an N-linked (GlcNAc...) asparagine glycan.

It belongs to the bZIP family. ATF subfamily. Homodimer. Interacts with HCFC1; the interaction is required to stimulate CREB3 transcriptional activity. Interacts with CREBZF; the interaction occurs only in combination with HCFC1. Interacts (via central part and transmembrane region) with DCSTAMP (via C-terminus cytoplasmic domain). Interacts with OS9. Interacts (via leucine-zipper domain) with CREBRF (via leucine-zipper domain); the interaction occurs only after CREB3 activation and promotes CREB3 degradation. Interacts (via C-terminal domain) with CCR1. In terms of processing, first proteolytically cleaved by site-1 protease (S1P) that generates membrane-associated N-terminus and a luminal C-terminus forms. The membrane-associated N-terminus form is further proteolytically processed probably by the site-2 protease (S2P) through a regulated intramembrane proteolysis (RIP), releasing the transcriptional active processed cyclic AMP-responsive element-binding protein 3 form, which is transported to the nucleus. The proteolytic cleavage is strongly induced during dendritic cell (DC) maturation and inhibited by DCSTAMP. That form is rapidly degraded. N-glycosylated. As to expression, widely expressed.

The protein resides in the endoplasmic reticulum membrane. Its subcellular location is the golgi apparatus. The protein localises to the nucleus. It localises to the cytoplasm. Endoplasmic reticulum (ER)-bound sequence-specific transcription factor that directly binds DNA and activates transcription. Plays a role in the unfolded protein response (UPR), promoting cell survival versus ER stress-induced apoptotic cell death. Also involved in cell proliferation, migration and differentiation, tumor suppression and inflammatory gene expression. Acts as a positive regulator of LKN-1/CCL15-induced chemotaxis signaling of leukocyte cell migration. Associates with chromatin to the HERPUD1 promoter. Also induces transcriptional activation of chemokine receptors. Functions as a negative transcriptional regulator in ligand-induced transcriptional activation of the glucocorticoid receptor NR3C1 by recruiting and activating histone deacetylases (HDAC1, HDAC2 and HDAC6). Also decreases the acetylation level of histone H4. Does not promote the chemotactic activity of leukocyte cells. Functionally, this is the transcriptionally active form that translocates to the nucleus and activates unfolded protein response (UPR) target genes during endoplasmic reticulum (ER) stress response. Binds the cAMP response element (CRE) (consensus: 5'-GTGACGT[AG][AG]-3') and C/EBP sequences present in many promoters to activate transcription of the genes. Binds to the unfolded protein response element (UPRE) consensus sequences sites. Binds DNA to the 5'-CCAC[GA]-3'half of ERSE II (5'-ATTGG-N-CCACG-3'). The protein is Cyclic AMP-responsive element-binding protein 3 (Creb3) of Mus musculus (Mouse).